Consider the following 449-residue polypeptide: MSNVIENLGKLDRKVTLAIPKAEVQKETQERLARLSKTVKMSGFRPGKVPMKMVEKQYGQQVEFEVRFDKAARKFFDITQAQEVKVAGQPKFDIKTEGVADDELAFEATFEVYPEVKIGDLASAEVTRTKTEIGDAEIDKTVDILRKQRVHFHARGDAGAHGDGGADVAAQNGDRVTLDFVGKIDGVEFAGGKAEDFVYVLGEGRMLPEFETATLGLKVGESKSFPLTFPADYHGKEVAGKTAEFTVTLKKVEWAHLPEVDDAFAKSLGIADGSVEKMRADIRENLEREVKRRTHSMLKDQVMEALLKVSELDVPKALVEQDQERLVEMARRDLEQRGMPNAKDMPIPAEMFTQQAERRVKLGLILAEIVKANGLEAKPDQIKAEIEDFAKSYEDPKEVMRWYYGDQQRLAEMEAYVLENNVVNFVCDKAKVADKTVSFEELTAAPAQA.

The PPIase FKBP-type domain maps to 173–258 (GDRVTLDFVG…LKKVEWAHLP (86 aa)).

It belongs to the FKBP-type PPIase family. Tig subfamily.

The protein localises to the cytoplasm. The enzyme catalyses [protein]-peptidylproline (omega=180) = [protein]-peptidylproline (omega=0). In terms of biological role, involved in protein export. Acts as a chaperone by maintaining the newly synthesized protein in an open conformation. Functions as a peptidyl-prolyl cis-trans isomerase. In Cupriavidus metallidurans (strain ATCC 43123 / DSM 2839 / NBRC 102507 / CH34) (Ralstonia metallidurans), this protein is Trigger factor.